Here is a 31-residue protein sequence, read N- to C-terminus: Cytochrome b6-f complex subunit 6 (31 aa).

A helical membrane pass occupies residues 4–26 (ITSYFGFLLAASTITPALLIGLS).

The protein belongs to the PetL family. The 4 large subunits of the cytochrome b6-f complex are cytochrome b6, subunit IV (17 kDa polypeptide, PetD), cytochrome f and the Rieske protein, while the 4 small subunits are PetG, PetL, PetM and PetN. The complex functions as a dimer.

The protein localises to the plastid. The protein resides in the chloroplast thylakoid membrane. Functionally, component of the cytochrome b6-f complex, which mediates electron transfer between photosystem II (PSII) and photosystem I (PSI), cyclic electron flow around PSI, and state transitions. PetL is important for photoautotrophic growth as well as for electron transfer efficiency and stability of the cytochrome b6-f complex. The chain is Cytochrome b6-f complex subunit 6 from Illicium oligandrum (Star anise).